A 63-amino-acid chain; its full sequence is Putative transmembrane protein ORF63 (63 aa).

The Extracellular portion of the chain corresponds to 1–8; the sequence is MQSGNFTL. The chain crosses the membrane as a helical span at residues 9 to 29; that stretch reads EVIMYLINSILAFIMIFFTFV. At 30 to 31 the chain is on the cytoplasmic side; that stretch reads NP. The helical transmembrane segment at 32-52 threads the bilayer; the sequence is SLLKCQYWTYILVALITAIIF. Residues 53–63 are Extracellular-facing; sequence HTGSKVGKSSG.

It localises to the host membrane. The polypeptide is Putative transmembrane protein ORF63 (Acidianus filamentous virus 1 (isolate United States/Yellowstone) (AFV-1)).